Consider the following 488-residue polypeptide: Histone deacetylase 2 (488 aa).

Residues 9–322 (KKKVCYYYDG…WTYETAVALD (314 aa)) form a histone deacetylase region. Residues Gly28 and Lys32 each coordinate 1D-myo-inositol 1,4,5,6-tetrakisphosphate. An N6-acetyllysine; alternate modification is found at Lys75. A Glycyl lysine isopeptide (Lys-Gly) (interchain with G-Cter in SUMO2); alternate cross-link involves residue Lys75. His142 is an active-site residue. Residues Asp175, Asp177, His179, Phe188, Thr191, Val194, Ser198, and Phe199 each contribute to the Ca(2+) site. Positions 177 and 179 each coordinate Zn(2+). Lys221 carries the N6-acetyllysine modification. Tyr223 contributes to the Ca(2+) binding site. Residue Cys262 is modified to S-nitrosocysteine. Position 265 (Asp265) interacts with Zn(2+). A 1D-myo-inositol 1,4,5,6-tetrakisphosphate-binding site is contributed by Arg271. The residue at position 274 (Cys274) is an S-nitrosocysteine. Residues 389 to 488 (AVHEDSGDED…GTKSEQLSNP (100 aa)) are disordered. Ser394, Ser407, Ser422, and Ser424 each carry phosphoserine. Basic and acidic residues predominate over residues 402–417 (PDKRISIRASDKRIAC). A compositionally biased stretch (acidic residues) spans 418-428 (DEEFSDSEDEG). Basic and acidic residues predominate over residues 429–481 (EGGRRNVADHKKGAKKARIEEDKKETEDKKTDVKEEDKSKDNSGEKTDTKGTK). Glycyl lysine isopeptide (Lys-Gly) (interchain with G-Cter in SUMO2) cross-links involve residues Lys439, Lys452, Lys458, Lys462, Lys478, and Lys481.

It belongs to the histone deacetylase family. HD type 1 subfamily. As to quaternary structure, part of the core histone deacetylase (HDAC) complex composed of HDAC1, HDAC2, RBBP4 and RBBP7, the core complex associates with SIN3, SAP18 and SAP30 to form the SIN3 HDAC complex. Component of the nucleosome remodeling and deacetylase (NuRD) repressor complex, composed of core proteins MTA1, MTA2, MTA3, RBBP4, RBBP7, HDAC1, HDAC2, MBD2, MBD3, and peripherally associated proteins CDK2AP1, CDK2AP2, GATAD2A, GATAD2B, CHD3, CHD4 and CHD5. The exact stoichiometry of the NuRD complex is unknown, and some subunits such as MBD2 and MBD3, GATAD2A and GATAD2B, and CHD3, CHD4 and CHD5 define mutually exclusive NuRD complexes. Component of a RCOR/GFI/KDM1A/HDAC complex. Component of a BHC histone deacetylase complex that contains HDAC1, HDAC2, HMG20B, KDM1A, RCOR1 and PHF21A. The BHC complex may also contain ZMYM2, ZNF217, ZMYM3, GSE1 and GTF2I. Part of a complex containing the core histones H2A, H2B, H3 and H4, DEK and unphosphorylated DAXX. Part of a complex containing ATR and CHD4. Forms a heterologous complex at least with YY1. Interacts in the late S-phase of DNA-replication with DNMT1 in the other transcriptional repressor complex composed of DNMT1, DMAP1, PCNA, CAF1. Component of a mSin3A corepressor complex that contains SIN3A, SAP130, SUDS3, ARID4B, HDAC1 and HDAC2. Part of a complex composed of TRIM28, HDAC1, HDAC2 and EHMT2. Part of a complex containing at least CDYL, MIER1, MIER2, HDAC1 and HDAC2. Component of a histone deacetylase complex containing DNTTIP1, ZNF541, HDAC1 and HDAC2. Forms a complex comprising APPL1, RUVBL2, APPL2, CTNNB1 and HDAC1. Interacts directly with GFI1. Interacts directly with GFI1B. Interacts with APEX1; the interaction is not dependent on the acetylated status of APEX1. Interacts with ATR. Interacts with BCL6 (non-acetylated form). Interacts with BEND3. Interacts with CBFA2T3. Interacts with CDK2AP1. Interacts with CHD4. Interacts with CHD5. Interacts with CHFR. Interacts with CRY1. Interacts with DNMT1. Interacts with GATAD2A. Interacts with HCFC1. Interacts with HDAC7. Interacts with HDAC10. Interacts with INSM1. Interacts with KDM4A. Interacts with MACROH2A1 (via the non-histone region). Interacts with MBD3L2. Interacts with MTA1, with a preference for sumoylated MTA1. Interacts with NACC2. Interacts with NRIP1. Interacts with PELP1. Interacts with PIMREG. Interacts with PRDM6. Interacts with PWWP2B. Interacts with SAP30. Interacts with SAP30L. Interacts with SETDB1. Interacts with SIX3. Interacts with SMARCAD1. Interacts with SNW1. Interacts with SPHK2. Interacts with SPEN/MINT. Interacts (CK2 phosphorylated form) with SP3. Interacts with SUV39H1. Interacts with TSHZ3 (via its N-terminus). Interacts with ZMYND8. Interacts with ZNF431. Interacts with ZNF263; recruited to the SIX3 promoter along with other proteins involved in chromatin modification and transcriptional corepression where it contributes to transcriptional repression. Identified in a complex with HDAC1, KCTD19, DNTTIP1 and ZNF541. Component of the SIN3B complex, which includes SIN3B, HDAC2, PHF12 and MORF4L1; interacts directly with all subunits. Zn(2+) serves as cofactor. Requires Ca(2+) as cofactor. In terms of processing, S-nitrosylated by GAPDH. In neurons, S-nitrosylation at Cys-262 and Cys-274 does not affect enzyme activity, but induces HDAC2 release from chromatin. This in turn increases acetylation of histones surrounding neurotrophin-dependent gene promoters and promotes their transcription. In embryonic cortical neurons, S-Nitrosylation regulates dendritic growth and branching. In terms of tissue distribution, widely expressed; lower levels in brain and lung.

Its subcellular location is the nucleus. The protein localises to the cytoplasm. The catalysed reaction is N(6)-acetyl-L-lysyl-[histone] + H2O = L-lysyl-[histone] + acetate. It carries out the reaction N(6)-acetyl-L-lysyl-[protein] + H2O = L-lysyl-[protein] + acetate. It catalyses the reaction N(6)-(2E)-butenoyl-L-lysyl-[protein] + H2O = (2E)-2-butenoate + L-lysyl-[protein]. The enzyme catalyses N(6)-(2-hydroxyisobutanoyl)-L-lysyl-[protein] + H2O = 2-hydroxy-2-methylpropanoate + L-lysyl-[protein]. The catalysed reaction is N(6)-[(S)-lactoyl]-L-lysyl-[protein] + H2O = (S)-lactate + L-lysyl-[protein]. With respect to regulation, inositol tetraphosphate (1D-myo-inositol 1,4,5,6-tetrakisphosphate) may act as an intermolecular glue between HDAC2 and N-Cor repressor complex components. In terms of biological role, histone deacetylase that catalyzes the deacetylation of lysine residues on the N-terminal part of the core histones (H2A, H2B, H3 and H4). Histone deacetylation gives a tag for epigenetic repression and plays an important role in transcriptional regulation, cell cycle progression and developmental events. Histone deacetylases act via the formation of large multiprotein complexes. Forms transcriptional repressor complexes by associating with MAD, SIN3, YY1 and N-COR. Component of a RCOR/GFI/KDM1A/HDAC complex that suppresses, via histone deacetylase (HDAC) recruitment, a number of genes implicated in multilineage blood cell development. Acts as a component of the histone deacetylase NuRD complex which participates in the remodeling of chromatin. Component of the SIN3B complex that represses transcription and counteracts the histone acetyltransferase activity of EP300 through the recognition H3K27ac marks by PHF12 and the activity of the histone deacetylase HDAC2. Also deacetylates non-histone targets: deacetylates TSHZ3, thereby regulating its transcriptional repressor activity. May be involved in the transcriptional repression of circadian target genes, such as PER1, mediated by CRY1 through histone deacetylation. Involved in MTA1-mediated transcriptional corepression of TFF1 and CDKN1A. In addition to protein deacetylase activity, also acts as a protein-lysine deacylase by recognizing other acyl groups: catalyzes removal of (2E)-butenoyl (crotonyl), lactoyl (lactyl) and 2-hydroxyisobutanoyl (2-hydroxyisobutyryl) acyl groups from lysine residues, leading to protein decrotonylation, delactylation and de-2-hydroxyisobutyrylation, respectively. This Homo sapiens (Human) protein is Histone deacetylase 2.